The primary structure comprises 238 residues: Thrombin-like enzyme collinein-1 (238 aa).

The region spanning V1 to A229 is the Peptidase S1 domain. Disulfide bonds link C7–C141, C28–C44, C78–C236, C120–C190, C152–C169, and C180–C205. Active-site charge relay system residues include H43 and D88. The Charge relay system role is filled by S184.

It belongs to the peptidase S1 family. Snake venom subfamily. Monomer. Expressed by the venom gland.

The protein localises to the secreted. Its activity is regulated as follows. Inhibited by Cu(2+) and, to a lesser extent, by Zn(2+) and Ba(2+). Not inhibited by Ca(2+) and Mg(2+). Its function is as follows. Thrombin-like snake venom serine protease. Releases fibrinopeptide A and B in the conversion of fibrinogen to fibrin, with preferential activity on the alpha chain of fibrinogen. Also hydrolyzes N-p-toluensulfonyl arginine ester (TAME) and chromogenic artificial substrates of the blood coagulation cascade: S-2222 for factor Xa, S-2302 for kallikrein and S-2238 for thrombin. When tested in vitro, the recombinant protein does not degrade blood clots, suggesting that this toxin lacks fibrinolytic activity. In addition, it moderately inhibits human Kv10.1/KCNH1/EAG1 currents, with a mechanism independent of its enzymatic activity. It selectively blocks Kv10.1/KCNH1/EAG1 in a time and dose-dependent manner (IC(50)=4.2 uM for native protein and IC(50)=2.5 uM for recombinant protein). It may have a preference in interacting with Kv10.1/KCNH1/EAG1 in its closed state, since the inhibitory effect of the toxin is decreased at more depolarized potentials. Corroboratively, it may have possible antitumor applications, since it reduces the viability of human breast cancer cell line MCF-7, which strongly expresses Kv10.1/KCNH1/EAG1, but does not affect the liver carcinoma and the non-tumorigenic epithelial breast cell lines, which weakly express Kv10.1/KCNH1/EAG1. When tested on peripheral blood mononuclear cells (PBMC), the native protein shows mild cytotoxicity, whereas the recombinant protein does not show any cytotoxicity. Native form is not immununogenic, since it does not induce statistically significant antibody production in mice, whereas recombinant form shows an antibody titer slightly higher than the native form. In vivo, subplantar injection in mice paw induces a discreet paw edema. In addition, intraperitoneal injection of the recombinant protein into mice led to fibrinogen depletion, resulting in the blood incoagulability. The sequence is that of Thrombin-like enzyme collinein-1 from Crotalus durissus collilineatus (Brazilian rattlesnake).